The primary structure comprises 262 residues: Ribosomal RNA small subunit methyltransferase A (262 aa).

Positions 16, 18, 43, 64, 89, and 109 each coordinate S-adenosyl-L-methionine.

This sequence belongs to the class I-like SAM-binding methyltransferase superfamily. rRNA adenine N(6)-methyltransferase family. RsmA subfamily.

The protein localises to the cytoplasm. The catalysed reaction is adenosine(1518)/adenosine(1519) in 16S rRNA + 4 S-adenosyl-L-methionine = N(6)-dimethyladenosine(1518)/N(6)-dimethyladenosine(1519) in 16S rRNA + 4 S-adenosyl-L-homocysteine + 4 H(+). Its function is as follows. Specifically dimethylates two adjacent adenosines (A1518 and A1519) in the loop of a conserved hairpin near the 3'-end of 16S rRNA in the 30S particle. May play a critical role in biogenesis of 30S subunits. The sequence is that of Ribosomal RNA small subunit methyltransferase A from Xanthomonas axonopodis pv. citri (strain 306).